The following is a 356-amino-acid chain: Probable arabinogalactan endo-beta-1,4-galactanase A (356 aa).

A signal peptide spans 1 to 21; that stretch reads MLGKTVLLPLLVLLCHSLASA. Asn-133 is a glycosylation site (N-linked (GlcNAc...) asparagine). Catalysis depends on Glu-157, which acts as the Proton donor. Glu-268 acts as the Nucleophile in catalysis.

Belongs to the glycosyl hydrolase 53 family.

The protein resides in the secreted. It catalyses the reaction The enzyme specifically hydrolyzes (1-&gt;4)-beta-D-galactosidic linkages in type I arabinogalactans.. In terms of biological role, endogalactanase involved in the degradation of plant cell wall polysaccharides, and more particularly of hairy regions of pectin. In Aspergillus fumigatus (strain ATCC MYA-4609 / CBS 101355 / FGSC A1100 / Af293) (Neosartorya fumigata), this protein is Probable arabinogalactan endo-beta-1,4-galactanase A (galA).